A 397-amino-acid chain; its full sequence is MYVSDLALTDFRSYADLVIGLEPGITAFVGPNGQGKTNLVEAIGYLGTFSSHRVSGDAALVRWGAERAVVRAKVVRRARPTLVELEIVAGRANRARVDRSPVSRVREAAGIARSVIFAPEDLALVKGDPDGRRRFLDDLLVQLSPRLAGVRSEYERVLRQRTALLKSAGPARRRSGDGEPAALRTLDVWDGHLARAGAELVAARVRLVQDLRPHVGATYEQVSAAQSEARISYRASVEEARPDDAPTEVVESVETELTRADLVEARLLEAMARLRTREIERGVSLVGPHRDDLVLTLADMPAKGYASHGESWSYALALRLASYALLRDDGEAGGGGEPVLVLDDVFAELDARRRTRLASIVASAEQVLVTAAVAEDVPEELEGARMDVMGGEVLRVR.

Residue 30-37 (GPNGQGKT) coordinates ATP.

This sequence belongs to the RecF family.

The protein resides in the cytoplasm. Functionally, the RecF protein is involved in DNA metabolism; it is required for DNA replication and normal SOS inducibility. RecF binds preferentially to single-stranded, linear DNA. It also seems to bind ATP. The polypeptide is DNA replication and repair protein RecF (Beutenbergia cavernae (strain ATCC BAA-8 / DSM 12333 / CCUG 43141 / JCM 11478 / NBRC 16432 / NCIMB 13614 / HKI 0122)).